A 370-amino-acid chain; its full sequence is Protein FAM110B (370 aa).

Disordered regions lie at residues 127–151 (SSEG…RSEA) and 237–256 (KSPE…RPSL). Phosphoserine is present on residues serine 238 and serine 301. Residues 317-337 (DCEQSQDSNSDLRNDDSANDR) are disordered. Residues 326-335 (SDLRNDDSAN) are compositionally biased toward basic and acidic residues.

This sequence belongs to the FAM110 family.

It is found in the cytoplasm. The protein localises to the cytoskeleton. The protein resides in the microtubule organizing center. It localises to the centrosome. The polypeptide is Protein FAM110B (FAM110B) (Pongo abelii (Sumatran orangutan)).